We begin with the raw amino-acid sequence, 932 residues long: Glycine dehydrogenase (decarboxylating) (932 aa).

Lys685 is subject to N6-(pyridoxal phosphate)lysine.

The protein belongs to the GcvP family. In terms of assembly, the glycine cleavage system is composed of four proteins: P, T, L and H. Pyridoxal 5'-phosphate is required as a cofactor.

The catalysed reaction is N(6)-[(R)-lipoyl]-L-lysyl-[glycine-cleavage complex H protein] + glycine + H(+) = N(6)-[(R)-S(8)-aminomethyldihydrolipoyl]-L-lysyl-[glycine-cleavage complex H protein] + CO2. Its function is as follows. The glycine cleavage system catalyzes the degradation of glycine. The P protein binds the alpha-amino group of glycine through its pyridoxal phosphate cofactor; CO(2) is released and the remaining methylamine moiety is then transferred to the lipoamide cofactor of the H protein. The sequence is that of Glycine dehydrogenase (decarboxylating) from Brucella suis biovar 1 (strain 1330).